We begin with the raw amino-acid sequence, 585 residues long: Frizzled-10 (585 aa).

The first 24 residues, 1–24 (MGPAAGNLVRAVLALCWLAEHCAG), serve as a signal peptide directing secretion. Residues 25 to 229 (ISSIDIERPG…DVYWSKDDKQ (205 aa)) are Extracellular-facing. An FZ domain is found at 33–154 (PGDGRCQPIE…NDPNYLCMEA (122 aa)). Intrachain disulfides connect Cys-38–Cys-99, Cys-46–Cys-92, Cys-83–Cys-121, Cys-110–Cys-151, and Cys-114–Cys-138. Asn-52 carries an N-linked (GlcNAc...) asparagine glycan. Residues 155-195 (PNNGSDEPPRGSSMLPPMFRPQRPSTGHDLQQHKDSLSRTS) are disordered. The N-linked (GlcNAc...) asparagine glycan is linked to Asn-157. The chain crosses the membrane as a helical span at residues 230–250 (FAVIWIAIWSILCFFSSAFTV). The Cytoplasmic segment spans residues 251–265 (LTFLIDPQRFKYPER). Residues 266-286 (PIIFLSMCYCVYSVGYIIRLF) form a helical membrane-spanning segment. Over 287–314 (SGAESIACDRDSGQLYVIQEGLESTGCT) the chain is Extracellular. A helical membrane pass occupies residues 315–335 (IVFLVLYYFGMASSLWWVILT). Topologically, residues 336–355 (LTWFLAAGKKWGHEAIEANS) are cytoplasmic. The chain crosses the membrane as a helical span at residues 356–376 (SYFHLAAWAIPAVKTIMILVM). Topologically, residues 377 to 397 (RRVAGDELTGLCYVGSMDVNA) are extracellular. The helical transmembrane segment at 398–418 (LTGFVLIPLACYLIIGTSFIL) threads the bilayer. The Cytoplasmic segment spans residues 419–447 (SGFVALFHIRRVMKTGGENTDKLEKLMVR). Residues 448–468 (IGVFSVLYTVPATCVIACYFY) form a helical membrane-spanning segment. The Extracellular portion of the chain corresponds to 469–506 (ERLNMDYWKIVASQQKCKMNNQTKNLDCMMNNSIPAVE). N-linked (GlcNAc...) asparagine glycosylation is found at Asn-489 and Asn-499. A helical transmembrane segment spans residues 507 to 527 (IFMVKIFMLLVVGITSGMWIW). The Cytoplasmic segment spans residues 528 to 585 (TSKTLQSWQNVCSRRLKKRSRRKPASVITSSGIYKKPQHPQKTHLAKYESTLQPPTCV). Positions 530-535 (KTLQSW) match the Lys-Thr-X-X-X-Trp motif, mediates interaction with the PDZ domain of Dvl family members motif. Positions 583 to 585 (TCV) match the PDZ-binding motif.

Belongs to the G-protein coupled receptor Fz/Smo family. As to quaternary structure, interacts with WNT7A. As to expression, expressed in the dorsal ectoderm overlying the developing spinal cord.

The protein localises to the cell membrane. Functionally, receptor for Wnt proteins. Functions in the canonical Wnt/beta-catenin signaling pathway. Activation by WNT7A induces expression of beta-catenin target genes. The canonical Wnt/beta-catenin signaling pathway leads to the activation of disheveled proteins, inhibition of GSK-3 kinase, nuclear accumulation of beta-catenin and activation of Wnt target genes. A second signaling pathway involving PKC and calcium fluxes has been seen for some family members, but it is not yet clear if it represents a distinct pathway or if it can be integrated in the canonical pathway, as PKC seems to be required for Wnt-mediated inactivation of GSK-3 kinase. Both pathways seem to involve interactions with G-proteins. May be involved in transduction and intercellular transmission of polarity information during tissue morphogenesis and/or in differentiated tissues. In Gallus gallus (Chicken), this protein is Frizzled-10 (FZD10).